Consider the following 464-residue polypeptide: Glutamate decarboxylase (464 aa).

Position 274 is an N6-(pyridoxal phosphate)lysine (Lys274).

This sequence belongs to the group II decarboxylase family. Pyridoxal 5'-phosphate is required as a cofactor.

It catalyses the reaction L-glutamate + H(+) = 4-aminobutanoate + CO2. Functionally, catalyzes the pyridoxal-dependent decarboxylation of glutamate to produce 4-aminobutanoate. Has weak activity with aspartate, but cannot complement an E.coli panD deletion mutant. This Aliivibrio fischeri (strain ATCC 700601 / ES114) (Vibrio fischeri) protein is Glutamate decarboxylase.